Reading from the N-terminus, the 165-residue chain is Small ribosomal subunit protein eS10 (165 aa).

A Phosphotyrosine modification is found at tyrosine 12. The segment at 92–165 (ATLRRSRPET…FGRGRGQPPQ (74 aa)) is disordered. Residues 97–128 (SRPETGRPRPKGLEGERPARLTRGEADRDTYR) are compositionally biased toward basic and acidic residues. Residues lysine 138 and lysine 139 each participate in a glycyl lysine isopeptide (Lys-Gly) (interchain with G-Cter in ubiquitin) cross-link. A Phosphoserine modification is found at serine 146. Arginine 153 carries the omega-N-methylarginine modification. The span at 154–165 (GGFGRGRGQPPQ) shows a compositional bias: gly residues. Residues arginine 158 and arginine 160 each carry the symmetric dimethylarginine modification.

This sequence belongs to the eukaryotic ribosomal protein eS10 family. Component of the small ribosomal subunit. The methylated form interacts with NPM1. Methylated by PRMT5. Methylation is necessary for its interaction with NPS1, its localization in the granular component (GC) region of the nucleolus, for the proper assembly of ribosomes, protein synthesis and optimal cell proliferation. Post-translationally, monoubiquitinated by ZNF598 when a ribosome has stalled during translation of poly(A) sequences, leading to preclude synthesis of a long poly-lysine tail and initiate the ribosome quality control (RQC) pathway to degrade the potentially detrimental aberrant nascent polypeptide. Deubiquitinated by OTUD3 and USP21, antagonizing ZNF598 activity. Deubiquitinated by OTUD1, antagonizing ZNF598 activity and stimulating formation of polysomes: deubiquitination by OTUD1 promotes stability and translation of a subset mRNAs with a high abundance of rare codons can limit the translation rate. Deubiquitinated by USP10.

The protein localises to the cytoplasm. Its subcellular location is the nucleus. The protein resides in the nucleolus. Its function is as follows. Component of the 40S ribosomal subunit. The ribosome is a large ribonucleoprotein complex responsible for the synthesis of proteins in the cell. The polypeptide is Small ribosomal subunit protein eS10 (RPS10) (Oryctolagus cuniculus (Rabbit)).